A 414-amino-acid polypeptide reads, in one-letter code: tRNA N6-adenosine threonylcarbamoyltransferase, mitochondrial (414 aa).

The N-terminal 29 residues, 1 to 29 (MLMLRRTAGAIPKPPKSKVYGFLRRFSVH), are a transit peptide targeting the mitochondrion. 2 positions are modified to N6-acetyllysine: lysine 74 and lysine 140. Positions 147 and 151 each coordinate a divalent metal cation. Residues 169–173 (LISGG) and aspartate 202 contribute to the substrate site. Lysine 203 is subject to N6-acetyllysine. Substrate is bound by residues glycine 222 and glutamate 226. Residues lysine 230 and lysine 299 each carry the N6-acetyllysine modification. Residues 329–330 (SN) and threonine 357 each bind substrate. Aspartate 358 lines the a divalent metal cation pocket.

It belongs to the KAE1 / TsaD family. Monomer. A divalent metal cation serves as cofactor.

It is found in the mitochondrion. It carries out the reaction L-threonylcarbamoyladenylate + adenosine(37) in tRNA = N(6)-L-threonylcarbamoyladenosine(37) in tRNA + AMP + H(+). Its function is as follows. Required for the formation of a threonylcarbamoyl group on adenosine at position 37 (t(6)A37) in mitochondrial tRNAs that read codons beginning with adenine. Probably involved in the transfer of the threonylcarbamoyl moiety of threonylcarbamoyl-AMP (TC-AMP) to the N6 group of A37. Involved in mitochondrial genome maintenance. The protein is tRNA N6-adenosine threonylcarbamoyltransferase, mitochondrial of Mus musculus (Mouse).